Reading from the N-terminus, the 561-residue chain is Cytochrome P450 monooxygenase avaL (561 aa).

Residues isoleucine 19–leucine 39 traverse the membrane as a helical segment. Cysteine 508 lines the heme pocket.

The protein belongs to the cytochrome P450 family. Heme serves as cofactor.

It localises to the membrane. Its pathway is secondary metabolite biosynthesis. Functionally, cytochrome P450 monooxygenase; part of the cluster that mediates the biosynthesis of a highly modified cyclo-arginine-tryptophan dipeptide (cRW). The first step of the pathway is perfornmed by the arginine-containing cyclodipeptide synthase (RCPDS) avaA that acts as the scaffold-generating enzyme and is responsible for formation of the cyclo-Arg-Trp (cRW) diketopiperazine. AvaB then acts as a multifunctional flavoenzyme that is responsible for generating the cyclo-Arg-formylkynurenine DKP, which can be deformylated by avaC. AvaB then further catalyzes an additional N-oxidation followed by cyclization and dehydration. The next step is an N-acetylation of the guanidine group catalyzed by the arginine N-acetyltransferase avaD. The roles of the additional enzymes identified within the ava cluster still have to be determined. The sequence is that of Cytochrome P450 monooxygenase avaL from Aspergillus versicolor.